The sequence spans 604 residues: UvrABC system protein C (604 aa).

A GIY-YIG domain is found at Asp15–Ile92. The UVR domain occupies Glu197–Thr232.

It belongs to the UvrC family. In terms of assembly, interacts with UvrB in an incision complex.

The protein resides in the cytoplasm. Its function is as follows. The UvrABC repair system catalyzes the recognition and processing of DNA lesions. UvrC both incises the 5' and 3' sides of the lesion. The N-terminal half is responsible for the 3' incision and the C-terminal half is responsible for the 5' incision. In Lactiplantibacillus plantarum (strain ATCC BAA-793 / NCIMB 8826 / WCFS1) (Lactobacillus plantarum), this protein is UvrABC system protein C.